The chain runs to 160 residues: MRIIVIAVGRLKQGPERELAERYRERFESLGRKLGFRGLDIVELPESRHADATGRIAEEANAIAAHIPEHAAVVALSERGDNLDSATLARHLGRWRDDSVPCAVFLIGGADGLSAELSRVAKIRLAFGKATWPHQIVRILLLEQIYRAGTILAGHPYHRA.

Leucine 76 and glycine 108 together coordinate S-adenosyl-L-methionine.

It belongs to the RNA methyltransferase RlmH family. As to quaternary structure, homodimer.

The protein localises to the cytoplasm. The enzyme catalyses pseudouridine(1915) in 23S rRNA + S-adenosyl-L-methionine = N(3)-methylpseudouridine(1915) in 23S rRNA + S-adenosyl-L-homocysteine + H(+). Specifically methylates the pseudouridine at position 1915 (m3Psi1915) in 23S rRNA. In Afipia carboxidovorans (strain ATCC 49405 / DSM 1227 / KCTC 32145 / OM5) (Oligotropha carboxidovorans), this protein is Ribosomal RNA large subunit methyltransferase H.